The following is a 283-amino-acid chain: Movement protein (283 aa).

This sequence belongs to the cucumovirus movement protein family.

It localises to the host cell junction. The protein resides in the host plasmodesma. Transports viral genome to neighboring plant cells directly through plasmosdesmata, without any budding. The movement protein allows efficient cell to cell propagation, by bypassing the host cell wall barrier. Acts by forming a tubular structure at the host plasmodesmata, enlarging it enough to allow free passage of virion capsids. The protein is Movement protein of Cucumis sativus (Cucumber).